The sequence spans 428 residues: Enolase (428 aa).

Glutamine 165 lines the (2R)-2-phosphoglycerate pocket. The Proton donor role is filled by glutamate 207. Mg(2+) contacts are provided by aspartate 244, glutamate 283, and aspartate 310. Residues lysine 335, arginine 364, serine 365, and lysine 386 each coordinate (2R)-2-phosphoglycerate. The active-site Proton acceptor is the lysine 335.

Belongs to the enolase family. Mg(2+) is required as a cofactor.

It is found in the cytoplasm. Its subcellular location is the secreted. It localises to the cell surface. It carries out the reaction (2R)-2-phosphoglycerate = phosphoenolpyruvate + H2O. The protein operates within carbohydrate degradation; glycolysis; pyruvate from D-glyceraldehyde 3-phosphate: step 4/5. Catalyzes the reversible conversion of 2-phosphoglycerate (2-PG) into phosphoenolpyruvate (PEP). It is essential for the degradation of carbohydrates via glycolysis. The sequence is that of Enolase from Chlamydia pneumoniae (Chlamydophila pneumoniae).